The primary structure comprises 175 residues: Thioredoxin-like protein CITRX, chloroplastic (175 aa).

The N-terminal 64 residues, 1–64 (MQAASLAFHP…KPPAVGKYVR (64 aa)), are a transit peptide targeting the chloroplast. Residues 74–175 (AKEIQELIKG…MMRDIIDNDL (102 aa)) enclose the Thioredoxin domain. Active-site nucleophile residues include Cys-98 and Cys-101. Residues Cys-98 and Cys-101 are joined by a disulfide bond.

This sequence belongs to the thioredoxin family. Plant CITRX-type subfamily. As to quaternary structure, interacts with Cf-9 resistance protein.

It is found in the plastid. It localises to the chloroplast. Functionally, probable thiol-disulfide oxidoreductase that may play a role in proper chloroplast development. In Solanum lycopersicum (Tomato), this protein is Thioredoxin-like protein CITRX, chloroplastic.